Here is a 326-residue protein sequence, read N- to C-terminus: MEDHGFEELSTRTHDLNVRRLTKGNINFLLSTGQETYSVEDSGLLRILLVGKSGCGKSATGNSILRRPAFESRLRGQSVTRTSQAEMGTWEGRSFLVVDTPPIFESKIQNQDMDKDIGNCYLMCAPGPHVLLLVTQLGRYTVEDAMAVRMVKQIFGVGVMRYMIVLFTHKEDLADESLEEFVTHTGNLDLHRLVQECGRRYCAFNNKASGEEQQGQLAELMALVRRLEQEHEGSFHSNDLFVYTQVFLRGGYSEHQEPYKFYLTKVRQEVEKQKRELEEQEGSWMAKMLCRVTSCLDWHIAVSVLLIVLGLTLLITLINMYIGRWK.

Residues 1-297 (MEDHGFEELS…MLCRVTSCLD (297 aa)) are Cytoplasmic-facing. The AIG1-type G domain maps to 42 to 245 (SGLLRILLVG…HSNDLFVYTQ (204 aa)). GTP-binding positions include 51–59 (GKSGCGKSA), S72, 169–171 (HKE), and N206. Residues 298–318 (WHIAVSVLLIVLGLTLLITLI) traverse the membrane as a helical; Anchor for type IV membrane protein segment. Residues 319 to 326 (NMYIGRWK) are Lumenal-facing.

Belongs to the TRAFAC class TrmE-Era-EngA-EngB-Septin-like GTPase superfamily. AIG1/Toc34/Toc159-like paraseptin GTPase family. IAN subfamily. As to quaternary structure, interacts with BAD, BAK1, BAX, BCL2, BCL2L1/Bcl-xL and BCL2L11/BimEL. The interaction with BAX is increased, when cells initiate apoptosis upon IL2 withdrawal. Forms a complex with BCL2L1 or MCL1 and HSPA8/HSC70; the interaction between HSPA8 and BCL2L1 or MCL1 is impaired in the absence of GIMAP5. May interact (via N-terminus) with microtubules. In terms of tissue distribution, primarily expressed in spleen, heart, lung and intestine and, at lower levels, in kidney, stomach and muscle. Expressed in thymus and lymph nodes (at protein level). In the spleen, expressed in periarteriolar lymphatic sheets. Isoform 2: Expressed at higher levels in T lymphocytes compared to isoform 1.

It localises to the lysosome membrane. The protein localises to the endosome. The protein resides in the multivesicular body membrane. It is found in the endosome membrane. Its function is as follows. Required for mitochondrial integrity and T-cell survival. May contribute to T-cell quiescence. Plays a role in T lymphocyte development and the optimal generation of CD4/CD8 double-positive thymocytes. Inhibitor of GSK3A, possibly by sequestering GSK3A in cytoplasmic vesicles and impairing its translocation to the nucleus. Consequently, impairs GSK3A-dependent transcriptional program and regulation of the DNA damage response occurring during T cells proliferation. Required for the survival of peripheral T cells, natural killer (NK) and NK T-cell development and the maintenance of normal liver function. Promotes the survival of quiescent T-cells. May regulate Ca(2+) homeostasis by modulating lysosomal Ca(2+) stores, preventing its accumulation in the absence of T cell activation. May play a role in mitochondrial DNA segregation in hematopoietic tissues. Is a regulator of liver endothelial cell homeostasis. The protein is GTPase IMAP family member 5 (Gimap5) of Rattus norvegicus (Rat).